Here is a 1904-residue protein sequence, read N- to C-terminus: MLGGVGGRHMSTRRRGSSPLVRGGAGLTGYAGPGASGNSNDVAAIPPDMQRYAGRRRRAVTTSDHKSCALVQTRIKLGDIMLAAQEAAQRDPGYASQYRRRPRLAGLSFGDWTSFGGEVPGLVDMAPGRDQGGGAGGGGGGGKGTTSLFILSEDNCIRKHTRFIIEWPPFEYAVLLTIIANCVVLALEEHLPKQDKTILAQKLEATEIYFLGIFCVEASLKILALGFVLHRGSYLRNIWNIMDFFVVVTGFITAFSQGIELDMDLRTLRAIRVLRPLKLVSGIPSLQVVLKSIIKAMAPLLQIGLLVLFAIVIFAIIGLEFYSGTLHKTCYSIRDINVIVKEGEQASPCNTDNKSEAPFGAHVCDANISTCMDHWEGPNFGITSFDNIGFAMLTVFQCITMEGWTAILYWTNDALGSTYNWIYFIPLIVLGSFFMLNLVLGVLSGEFAKEREKVENRQSFLKLRRQQQLEHELYCYLNWICKAEEVILAEERTTEEEKKHILEGRKRAEAKKKKLGKSKSTDTEEEEGDDDQDDGELSSSTKEKGPCKQFWLAEKRFRYWIRKSVKSQKFYWFVIVLVFFNTVCVAVEHYGQPQWLTDFLYFAEFVFLALFMLEMFIKVYALGPRTYFDSSFNRFDCVVISGSIFEVIWSEVKSGSFGLSVLRALRLLRIFKVTKYWKSLRNLVISLLSSMRSIISLLFLLFLFILIFALLGMQLFGGQFNFDSGTPPTNFNTFPIALLTVFQILTGEDWNEVMYQGIESQGGHKKGMIYSLYFIVLVLFGNYTLLNVFLAIAVDNLANAQELSAAENEEEEEDKQKQAQEIEKEIQSLQNPKDGGAPKVEICPPNGKGGKQSSEEEKKQDEDDDTGPKPMLPYSSMFILSPTNPVRRAAHWVVNLRYFDFFIMVVISLSSIALAAEDPVWEDSPRNEVLNYFDYAFTGVFTVEMILKIIDLGIILHPGSYLREFWNIMDAVVVICAAVSFAFDMTGSSAGQNLSTIKSLRVLRVLRPLKTIKRVPKLKAVFDCVVNSLKNVINILIVYILFQFIFAVIAVQLFNGKFFYCSDESKYTQQDCQGQYFVFEDGALLPEPKKREWQSQFFHYDNVMAAMLTLFAVQTGEGWPQILQNSMAATYEDKGPIQNFRIEMSIFYIVYFIVFPFFFVNIFVALIIITFQEQGEAELQDGEIDKNQKSCIDFTIQARPLERYMPKERNSVKYKIWRIVVSTPFEYFIMGLIVLNTVLLMMKFHRQSDAYKNTLKYMNMCFTGMFTVECILKIAAFGVRNFFKDAWNTFDFITVIGSIVDALVIEFGENFINVGFLRLFRAARLIKLLRQGYTIRILLWTFVQSFKALPYVCLLIAMLFFIYAIIGMQVFGNIALDADTSITKHNNFQSFIQGLMLLFRCATGEAWPNIMLSCVKGRPCDAKAGKQEGGCGSNIAYAYFVSFIFFCSFLMLNLFVAVIMDNFDYLTRDSSILGAHHLDEFVRIWAEYDPNATGKIHYTEMYDMLKNMDPPLGFGNKCPNRLAYKKLIRMNMPVDVDLKVNFTTTLFALIRENLNIKVRRASERNQANEELRDTIRSIWPLQAKKMLDLLIPRNEEIGRGKMTVGKIYVCLLILESWRTTRFGQIESAGQPIMELQDVVVSDSRAGSLESLTHTGKRLHPPVQPVRHPSRSPSLRHSPGRPGYDHHGHYYHEGPGFSDTVSNVVEIQRHTHHPHPSQYNHRHRMRGPWSASTSPARTPSPIHHIDRGRHYGTTSLEQRSRSPSPIGGRQPPHTHQHYHRHHPHQHSYPVLVTRRGRGRRLPPTPNKPSTLQLKPANINFPKLNASPTHGSHIHVPIPAGMQHPPPGQHLPPMQPSHCPLSFEQAVAMGRGGRLLPSPVPNGYKPQPQAKQRTPRHSDSDEDDWC.

Residues 1-45 (MLGGVGGRHMSTRRRGSSPLVRGGAGLTGYAGPGASGNSNDVAAI) form a disordered region. Residues 23–35 (GGAGLTGYAGPGA) are compositionally biased toward gly residues. Over 30–168 (YAGPGASGNS…KHTRFIIEWP (139 aa)) the chain is Cytoplasmic. Residues 155–447 (NCIRKHTRFI…LVLGVLSGEF (293 aa)) form an I repeat. Residues 169–187 (PFEYAVLLTIIANCVVLAL) traverse the membrane as a helical segment. At 188-205 (EEHLPKQDKTILAQKLEA) the chain is on the extracellular side. The helical transmembrane segment at 206–225 (TEIYFLGIFCVEASLKILAL) threads the bilayer. Residues 226–237 (GFVLHRGSYLRN) lie on the Cytoplasmic side of the membrane. A helical membrane pass occupies residues 238–259 (IWNIMDFFVVVTGFITAFSQGI). Over 260–264 (ELDMD) the chain is Extracellular. Residues 265–283 (LRTLRAIRVLRPLKLVSGI) traverse the membrane as a helical segment. The Cytoplasmic segment spans residues 284–302 (PSLQVVLKSIIKAMAPLLQ). Residues 303-322 (IGLLVLFAIVIFAIIGLEFY) traverse the membrane as a helical segment. Residues 323–419 (SGTLHKTCYS…WTNDALGSTY (97 aa)) lie on the Extracellular side of the membrane. Residues asparagine 353 and asparagine 367 are each glycosylated (N-linked (GlcNAc...) asparagine). Residues 420-444 (NWIYFIPLIVLGSFFMLNLVLGVLS) traverse the membrane as a helical segment. The Cytoplasmic portion of the chain corresponds to 445–568 (GEFAKEREKV…YWIRKSVKSQ (124 aa)). The tract at residues 513–543 (KKLGKSKSTDTEEEEGDDDQDDGELSSSTKE) is disordered. The segment covering 523–536 (TEEEEGDDDQDDGE) has biased composition (acidic residues). The stretch at 554-797 (EKRFRYWIRK…VFLAIAVDNL (244 aa)) is one II repeat. Residues 569–587 (KFYWFVIVLVFFNTVCVAV) form a helical membrane-spanning segment. The Extracellular portion of the chain corresponds to 588–602 (EHYGQPQWLTDFLYF). The helical transmembrane segment at 603–622 (AEFVFLALFMLEMFIKVYAL) threads the bilayer. At 623–630 (GPRTYFDS) the chain is on the cytoplasmic side. The helical transmembrane segment at 631-649 (SFNRFDCVVISGSIFEVIW) threads the bilayer. The Extracellular segment spans residues 650–658 (SEVKSGSFG). The chain crosses the membrane as a helical span at residues 659 to 677 (LSVLRALRLLRIFKVTKYW). Residues 678-696 (KSLRNLVISLLSSMRSIIS) are Cytoplasmic-facing. The helical transmembrane segment at 697-716 (LLFLLFLFILIFALLGMQLF) threads the bilayer. Residues 717-769 (GGQFNFDSGTPPTNFNTFPIALLTVFQILTGEDWNEVMYQGIESQGGHKKGMI) are Extracellular-facing. Residues 770–794 (YSLYFIVLVLFGNYTLLNVFLAIAV) form a helical membrane-spanning segment. The Cytoplasmic segment spans residues 795–895 (DNLANAQELS…VRRAAHWVVN (101 aa)). The segment at 827 to 869 (QSLQNPKDGGAPKVEICPPNGKGGKQSSEEEKKQDEDDDTGPK) is disordered. The stretch at 890-1177 (AHWVVNLRYF…IITFQEQGEA (288 aa)) is one III repeat. The helical transmembrane segment at 896–914 (LRYFDFFIMVVISLSSIAL) threads the bilayer. Over 915–930 (AAEDPVWEDSPRNEVL) the chain is Extracellular. The helical transmembrane segment at 931–950 (NYFDYAFTGVFTVEMILKII) threads the bilayer. The Cytoplasmic portion of the chain corresponds to 951–962 (DLGIILHPGSYL). Residues 963 to 981 (REFWNIMDAVVVICAAVSF) traverse the membrane as a helical segment. Topologically, residues 982–994 (AFDMTGSSAGQNL) are extracellular. N-linked (GlcNAc...) asparagine glycosylation occurs at asparagine 993. A helical transmembrane segment spans residues 995-1013 (STIKSLRVLRVLRPLKTIK). The Cytoplasmic portion of the chain corresponds to 1014-1032 (RVPKLKAVFDCVVNSLKNV). Residues 1033-1052 (INILIVYILFQFIFAVIAVQ) form a helical membrane-spanning segment. Topologically, residues 1053–1141 (LFNGKFFYCS…EDKGPIQNFR (89 aa)) are extracellular. Residues 1142-1166 (IEMSIFYIVYFIVFPFFFVNIFVAL) traverse the membrane as a helical segment. Residues 1167-1221 (IIITFQEQGEAELQDGEIDKNQKSCIDFTIQARPLERYMPKERNSVKYKIWRIVV) are Cytoplasmic-facing. The IV repeat unit spans residues 1214-1470 (YKIWRIVVST…DNFDYLTRDS (257 aa)). Residues 1222–1250 (STPFEYFIMGLIVLNTVLLMMKFHRQSDA) traverse the membrane as a helical segment. The Extracellular portion of the chain corresponds to 1251 to 1255 (YKNTL). The chain crosses the membrane as a helical span at residues 1256 to 1275 (KYMNMCFTGMFTVECILKIA). At 1276-1283 (AFGVRNFF) the chain is on the cytoplasmic side. A helical transmembrane segment spans residues 1284–1302 (KDAWNTFDFITVIGSIVDA). Residues 1303 to 1309 (LVIEFGE) are Extracellular-facing. A helical membrane pass occupies residues 1310–1328 (NFINVGFLRLFRAARLIKL). The Cytoplasmic portion of the chain corresponds to 1329-1347 (LRQGYTIRILLWTFVQSFK). A helical membrane pass occupies residues 1348 to 1367 (ALPYVCLLIAMLFFIYAIIG). At 1368 to 1431 (MQVFGNIALD…AKAGKQEGGC (64 aa)) the chain is on the extracellular side. A phenylalkylamine binding region spans residues 1430 to 1471 (GCGSNIAYAYFVSFIFFCSFLMLNLFVAVIMDNFDYLTRDSS). Residues 1432–1456 (GSNIAYAYFVSFIFFCSFLMLNLFV) form a helical membrane-spanning segment. At 1457–1904 (AVIMDNFDYL…HSDSDEDDWC (448 aa)) the chain is on the cytoplasmic side. Residues 1476–1511 (HHLDEFVRIWAEYDPNATGKIHYTEMYDMLKNMDPP) enclose the EF-hand domain. Aspartate 1489, asparagine 1491, threonine 1493, lysine 1495, and glutamate 1500 together coordinate Ca(2+). 3 disordered regions span residues 1652 to 1694 (THTG…HEGP), 1710 to 1788 (THHP…HSYP), and 1870 to 1904 (GGRL…DDWC). A compositionally biased stretch (low complexity) spans 1670-1681 (RSPSLRHSPGRP). The span at 1682-1691 (GYDHHGHYYH) shows a compositional bias: basic and acidic residues. Residues 1710–1725 (THHPHPSQYNHRHRMR) are compositionally biased toward basic residues. The span at 1727-1740 (PWSASTSPARTPSP) shows a compositional bias: low complexity. The segment covering 1751 to 1762 (GTTSLEQRSRSP) has biased composition (polar residues). Residues 1771 to 1784 (PHTHQHYHRHHPHQ) are compositionally biased toward basic residues.

Belongs to the calcium channel alpha-1 subunit (TC 1.A.1.11) family. CACNA1I subfamily. In terms of assembly, interacts with CATSPER1 and CATSPER2, leading to suppress T-type calcium channel activity.

It is found in the membrane. Its function is as follows. Voltage-sensitive calcium channels (VSCC) mediate the entry of calcium ions into excitable cells and are also involved in a variety of calcium-dependent processes, including muscle contraction, neurotransmitter release, gene expression, cell motility, cell division and cell death. In Apis mellifera (Honeybee), this protein is Voltage-dependent calcium channel type A subunit alpha-1 (CAC).